We begin with the raw amino-acid sequence, 539 residues long: GMP synthase [glutamine-hydrolyzing] (539 aa).

One can recognise a Glutamine amidotransferase type-1 domain in the interval 4–202 (KILILDFGSQ…VLQIAGCKPD (199 aa)). The active-site Nucleophile is C81. Active-site residues include H176 and E178. A GMPS ATP-PPase domain is found at 203–395 (WVMRDHIEEA…LGLPPEMVYR (193 aa)). 230–236 (SGGVDSS) serves as a coordination point for ATP.

Homodimer.

The enzyme catalyses XMP + L-glutamine + ATP + H2O = GMP + L-glutamate + AMP + diphosphate + 2 H(+). Its pathway is purine metabolism; GMP biosynthesis; GMP from XMP (L-Gln route): step 1/1. In terms of biological role, catalyzes the synthesis of GMP from XMP. This chain is GMP synthase [glutamine-hydrolyzing], found in Cupriavidus taiwanensis (strain DSM 17343 / BCRC 17206 / CCUG 44338 / CIP 107171 / LMG 19424 / R1) (Ralstonia taiwanensis (strain LMG 19424)).